Reading from the N-terminus, the 313-residue chain is Small glutamine-rich tetratricopeptide repeat-containing protein alpha (313 aa).

The segment at 66–100 is disordered; the sequence is ATGKEMPQDLRSPARTPPSEEDSAEAERLKTEGNE. Ser77 carries the post-translational modification Phosphoserine. Thr81 is subject to Phosphothreonine. A Phosphoserine modification is found at Ser84. Basic and acidic residues predominate over residues 90-100; that stretch reads EAERLKTEGNE. TPR repeat units lie at residues 91-124, 125-158, and 159-192; these read AERL…NPAN, AVYF…DPAY, and SKAY…DPDN. Lys137 is modified (N6-acetyllysine). The disordered stretch occupies residues 250–269; sequence MISGGNNPLGTPGTSPSQND. Residue Ser301 is modified to Phosphoserine. The residue at position 303 (Thr303) is a Phosphothreonine. Residue Ser305 is modified to Phosphoserine.

This sequence belongs to the SGT family. Homodimer. Homooligomer. Interacts with DNAJC5 and DNAJC5B. Interacts (via TPR repeats) with HSP90AA1. Interacts (via Gln-rich region) with SLC2A1. Interacts with HSP90AB1. Interacts (via TPR repeats) with HSPA8/Hsc70; the interaction is direct. Interacts with BAG6 (via ubiquitin-like domain); interaction prevents interaction between BAG6 and RNF126. Forms a multiprotein complex, at least composed of DNAJB12, DNAJB14, HSPA8/Hsc70 and SGTA; interaction with DNAJB14 and HSPA8/Hsc70 is direct. As to quaternary structure, (Microbial infection) Interacts with Vpu and Gag from HIV-1. In terms of assembly, (Microbial infection) Interacts with SARS-CoV accessory protein 7a. In terms of tissue distribution, ubiquitous.

The protein localises to the cytoplasm. It localises to the nucleus. In terms of biological role, co-chaperone that binds misfolded and hydrophobic patches-containing client proteins in the cytosol. Mediates their targeting to the endoplasmic reticulum but also regulates their sorting to the proteasome when targeting fails. Functions in tail-anchored/type II transmembrane proteins membrane insertion constituting with ASNA1 and the BAG6 complex a targeting module. Functions upstream of the BAG6 complex and ASNA1, binding more rapidly the transmembrane domain of newly synthesized proteins. It is also involved in the regulation of the endoplasmic reticulum-associated misfolded protein catabolic process via its interaction with BAG6: collaborates with the BAG6 complex to maintain hydrophobic substrates in non-ubiquitinated states. Competes with RNF126 for interaction with BAG6, preventing the ubiquitination of client proteins associated with the BAG6 complex. Binds directly to HSC70 and HSP70 and regulates their ATPase activity. (Microbial infection) In case of infection by polyomavirus, involved in the virus endoplasmic reticulum membrane penetration and infection via interaction with DNAJB12, DNAJB14 and HSPA8/Hsc70. The polypeptide is Small glutamine-rich tetratricopeptide repeat-containing protein alpha (SGTA) (Homo sapiens (Human)).